The chain runs to 549 residues: Probable acyl-activating enzyme 10 (549 aa).

It belongs to the ATP-dependent AMP-binding enzyme family. In terms of tissue distribution, expressed at low levels in roots.

May act as an acid--thiol ligase that activates carboxylic acids by forming acyl-CoAs. This Arabidopsis thaliana (Mouse-ear cress) protein is Probable acyl-activating enzyme 10 (AEE10).